Consider the following 695-residue polypeptide: NADPH--cytochrome P450 reductase (695 aa).

The Lumenal portion of the chain corresponds to 1–8 (MAQLDTLD). The helical transmembrane segment at 9–31 (LVVLVVLLVGSAAYFTKGTYWAV) threads the bilayer. Residues 32–695 (PKDPYAASGP…SGSYQEDVWS (664 aa)) are Cytoplasmic-facing. In terms of domain architecture, Flavodoxin-like spans 66-221 (CVIFYGSQTG…DFLAWKEPMW (156 aa)). FMN contacts are provided by residues 72 to 77 (SQTGTA), 123 to 126 (ATYG), 169 to 178 (LGNNTYEHYQ), and Asp-204. Residues 277-538 (HNPFIAPIVE…HVRHSNFKLP (262 aa)) enclose the FAD-binding FR-type domain. Position 296 (Arg-296) interacts with NADP(+). FAD contacts are provided by residues 451–454 (RYYS), 469–471 (TAV), and 486–489 (GVTT). Residues Thr-552, 614–615 (SR), 620–624 (KVYVQ), and Glu-656 contribute to the NADP(+) site. Trp-694 lines the FAD pocket.

It belongs to the NADPH--cytochrome P450 reductase family. In the N-terminal section; belongs to the flavodoxin family. This sequence in the C-terminal section; belongs to the flavoprotein pyridine nucleotide cytochrome reductase family. The cofactor is FAD. It depends on FMN as a cofactor.

It localises to the endoplasmic reticulum membrane. Its subcellular location is the mitochondrion outer membrane. It is found in the cell membrane. It carries out the reaction 2 oxidized [cytochrome P450] + NADPH = 2 reduced [cytochrome P450] + NADP(+) + H(+). Its function is as follows. This enzyme is required for electron transfer from NADP to cytochrome P450 in microsomes. It can also provide electron transfer to heme oxygenase and cytochrome B5. Involved in ergosterol biosynthesis. The sequence is that of NADPH--cytochrome P450 reductase from Aspergillus terreus (strain NIH 2624 / FGSC A1156).